We begin with the raw amino-acid sequence, 270 residues long: MINKINFVKMHGLGNDFVIVHKRDLATVCNLSQLAKNMADRHTGIGCDQCIIYEEYNNVYTMIIYNIDGSNAKLCGNATRCLAKLIYLDTGKKDITIMVGKKKLLCNVEAANKISVNVGNVSFNETWMPSRDRIWAFAERYMLDLKETMCVDIGNPHLIIFSKLEPQDQKIIGQKLQAKELFVDGVNVNFAEVKDNKIYLSVWERGAGLTLACGSGACGSFAAGLKLGFVHSPSTVVFKYGNLIMQEEDGNIIMQGEATFVMRGEYYCEK.

Positions 15, 49, and 66 each coordinate substrate. Cys75 functions as the Proton donor in the catalytic mechanism. Residues 76-77, Asn155, Asn187, and 204-205 each bind substrate; these read GN and ER. The Proton acceptor role is filled by Cys213. Position 214–215 (214–215) interacts with substrate; the sequence is GS.

Belongs to the diaminopimelate epimerase family. Homodimer.

Its subcellular location is the cytoplasm. It carries out the reaction (2S,6S)-2,6-diaminopimelate = meso-2,6-diaminopimelate. The protein operates within amino-acid biosynthesis; L-lysine biosynthesis via DAP pathway; DL-2,6-diaminopimelate from LL-2,6-diaminopimelate: step 1/1. Functionally, catalyzes the stereoinversion of LL-2,6-diaminopimelate (L,L-DAP) to meso-diaminopimelate (meso-DAP), a precursor of L-lysine and an essential component of the bacterial peptidoglycan. In Rickettsia typhi (strain ATCC VR-144 / Wilmington), this protein is Diaminopimelate epimerase.